The following is a 332-amino-acid chain: Anthranilate phosphoribosyltransferase (332 aa).

5-phospho-alpha-D-ribose 1-diphosphate contacts are provided by residues Gly79, 82–83, Thr87, 89–92, 107–115, and Ser119; these read GD, NIST, and KHGNRSVSS. Gly79 contributes to the anthranilate binding site. Ser91 is a Mg(2+) binding site. Asn110 lines the anthranilate pocket. Residue Arg165 participates in anthranilate binding. Residues Asp223 and Glu224 each contribute to the Mg(2+) site.

The protein belongs to the anthranilate phosphoribosyltransferase family. In terms of assembly, homodimer. The cofactor is Mg(2+).

The enzyme catalyses N-(5-phospho-beta-D-ribosyl)anthranilate + diphosphate = 5-phospho-alpha-D-ribose 1-diphosphate + anthranilate. It functions in the pathway amino-acid biosynthesis; L-tryptophan biosynthesis; L-tryptophan from chorismate: step 2/5. Functionally, catalyzes the transfer of the phosphoribosyl group of 5-phosphorylribose-1-pyrophosphate (PRPP) to anthranilate to yield N-(5'-phosphoribosyl)-anthranilate (PRA). The polypeptide is Anthranilate phosphoribosyltransferase (Vibrio parahaemolyticus serotype O3:K6 (strain RIMD 2210633)).